We begin with the raw amino-acid sequence, 336 residues long: Aspartate carbamoyltransferase catalytic subunit (336 aa).

2 residues coordinate carbamoyl phosphate: Arg-72 and Thr-73. Lys-100 is a binding site for L-aspartate. Arg-122, His-155, and Gln-158 together coordinate carbamoyl phosphate. 2 residues coordinate L-aspartate: Arg-188 and Arg-242. Positions 288 and 289 each coordinate carbamoyl phosphate.

Belongs to the aspartate/ornithine carbamoyltransferase superfamily. ATCase family. As to quaternary structure, heterododecamer (2C3:3R2) of six catalytic PyrB chains organized as two trimers (C3), and six regulatory PyrI chains organized as three dimers (R2).

The enzyme catalyses carbamoyl phosphate + L-aspartate = N-carbamoyl-L-aspartate + phosphate + H(+). Its pathway is pyrimidine metabolism; UMP biosynthesis via de novo pathway; (S)-dihydroorotate from bicarbonate: step 2/3. Its function is as follows. Catalyzes the condensation of carbamoyl phosphate and aspartate to form carbamoyl aspartate and inorganic phosphate, the committed step in the de novo pyrimidine nucleotide biosynthesis pathway. This is Aspartate carbamoyltransferase catalytic subunit from Lactobacillus leichmannii.